The sequence spans 347 residues: tRNA N6-adenosine threonylcarbamoyltransferase (347 aa).

2 residues coordinate Fe cation: H115 and H119. Substrate is bound by residues 137–141 (LASGG), D170, G183, and N281. D309 lines the Fe cation pocket.

This sequence belongs to the KAE1 / TsaD family. The cofactor is Fe(2+).

It localises to the cytoplasm. The catalysed reaction is L-threonylcarbamoyladenylate + adenosine(37) in tRNA = N(6)-L-threonylcarbamoyladenosine(37) in tRNA + AMP + H(+). Functionally, required for the formation of a threonylcarbamoyl group on adenosine at position 37 (t(6)A37) in tRNAs that read codons beginning with adenine. Is involved in the transfer of the threonylcarbamoyl moiety of threonylcarbamoyl-AMP (TC-AMP) to the N6 group of A37, together with TsaE and TsaB. TsaD likely plays a direct catalytic role in this reaction. In Methylorubrum extorquens (strain CM4 / NCIMB 13688) (Methylobacterium extorquens), this protein is tRNA N6-adenosine threonylcarbamoyltransferase.